A 373-amino-acid polypeptide reads, in one-letter code: 3-isopropylmalate dehydrogenase (373 aa).

An NAD(+)-binding site is contributed by 82 to 93; the sequence is GPKWGTGTVRPE. 4 residues coordinate substrate: R100, R110, R139, and D231. Residues D231, D256, and D260 each coordinate Mg(2+). Residue 295–306 coordinates NAD(+); it reads GSAPDLPANKVN.

It belongs to the isocitrate and isopropylmalate dehydrogenases family. Homodimer. The cofactor is Mg(2+). Mn(2+) serves as cofactor.

It localises to the cytoplasm. It catalyses the reaction (2R,3S)-3-isopropylmalate + NAD(+) = 4-methyl-2-oxopentanoate + CO2 + NADH. It participates in amino-acid biosynthesis; L-leucine biosynthesis; L-leucine from 3-methyl-2-oxobutanoate: step 3/4. Its function is as follows. Catalyzes the oxidation of 3-carboxy-2-hydroxy-4-methylpentanoate (3-isopropylmalate) to 3-carboxy-4-methyl-2-oxopentanoate. The product decarboxylates to 4-methyl-2 oxopentanoate. In Candida albicans (Yeast), this protein is 3-isopropylmalate dehydrogenase (LEU2).